A 193-amino-acid polypeptide reads, in one-letter code: Cysteine and glycine-rich protein 1 (193 aa).

Residues 10–61 enclose the LIM zinc-binding 1 domain; sequence CGVCQKTVYFAEEVQCEGNSFHKSCFLCMVCKKNLDSTTVAVHGEEIYCKSC. A Nuclear localization signal motif is present at residues 64–69; sequence KKYGPK. Serine 81 is subject to Phosphoserine. The residue at position 84 (lysine 84) is an N6-acetyllysine. Lysine 91 is covalently cross-linked (Glycyl lysine isopeptide (Lys-Gly) (interchain with G-Cter in SUMO2)). Lysine 112, lysine 131, lysine 137, and lysine 161 each carry N6-acetyllysine. Residues 119 to 170 enclose the LIM zinc-binding 2 domain; it reads CPRCSQAVYAAEKVIGAGKSWHKACFRCAKCGKGLESTTLADKDGEIYCKGC. Serine 192 is modified (phosphoserine).

Interacts with ASCC1; ASCC2 and TRIP4.

Its subcellular location is the nucleus. Functionally, could play a role in neuronal development. The sequence is that of Cysteine and glycine-rich protein 1 (CSRP1) from Homo sapiens (Human).